Consider the following 110-residue polypeptide: Thiosulfate sulfurtransferase GlpE (110 aa).

The 89-residue stretch at 17–105 (RENGAQVVDI…WRSVYPADTS (89 aa)) folds into the Rhodanese domain. The active-site Cysteine persulfide intermediate is Cys-65.

It belongs to the GlpE family.

The protein localises to the cytoplasm. The enzyme catalyses thiosulfate + hydrogen cyanide = thiocyanate + sulfite + 2 H(+). It carries out the reaction thiosulfate + [thioredoxin]-dithiol = [thioredoxin]-disulfide + hydrogen sulfide + sulfite + 2 H(+). Transferase that catalyzes the transfer of sulfur from thiosulfate to thiophilic acceptors such as cyanide or dithiols. May function in a CysM-independent thiosulfate assimilation pathway by catalyzing the conversion of thiosulfate to sulfite, which can then be used for L-cysteine biosynthesis. This Pseudomonas paraeruginosa (strain DSM 24068 / PA7) (Pseudomonas aeruginosa (strain PA7)) protein is Thiosulfate sulfurtransferase GlpE.